The following is a 203-amino-acid chain: CASP-like protein 4B2 (203 aa).

Residues 1–57 (MAMVTADASAAADAATKQPDVEKDYSSYNGASTAGAGGGGVVESVVARWRREDMLDK) are Cytoplasmic-facing. A helical transmembrane segment spans residues 58–78 (CPLALHAAAAAFAFVALVLVA). The Extracellular portion of the chain corresponds to 79–92 (SNQHGDWMQFDRYQ). Residues 93–113 (EYMYLLAIAALAFAYSLAQAL) form a helical membrane-spanning segment. Residues 114–135 (RHAHRMRGGADPIPAPSARLFD) are Cytoplasmic-facing. A helical transmembrane segment spans residues 136–156 (FIADQVVAYLLMSALSAAIPI). At 157–171 (TNRMRTAVINNFTDA) the chain is on the extracellular side. A glycan (N-linked (GlcNAc...) asparagine) is linked at Asn167. A helical transmembrane segment spans residues 172–192 (TAAAISMAFLAFVALALSATV). The Cytoplasmic portion of the chain corresponds to 193–203 (SGYKLSRQMYM).

Belongs to the Casparian strip membrane proteins (CASP) family. In terms of assembly, homodimer and heterodimers.

It is found in the cell membrane. This Hordeum vulgare subsp. vulgare (Domesticated barley) protein is CASP-like protein 4B2.